Reading from the N-terminus, the 86-residue chain is Large ribosomal subunit protein eL43 (86 aa).

Positions 38, 41, 57, and 60 each coordinate Zn(2+). The C4-type zinc finger occupies 38 to 60 (CPFCGSTGTVRRVSVGVWSCRKC).

This sequence belongs to the eukaryotic ribosomal protein eL43 family. Putative zinc-binding subfamily. In terms of assembly, part of the 50S ribosomal subunit. The cofactor is Zn(2+).

In terms of biological role, binds to the 23S rRNA. In Aeropyrum pernix (strain ATCC 700893 / DSM 11879 / JCM 9820 / NBRC 100138 / K1), this protein is Large ribosomal subunit protein eL43.